A 749-amino-acid polypeptide reads, in one-letter code: Probable serine/threonine-protein kinase drkC (749 aa).

Positions 1-31 are cleaved as a signal peptide; sequence MIIINKYIRMNKIAILFSFFILICCTGYSIS. At 32-423 the chain is on the extracellular side; sequence YKINGINENK…TSPNYQKIIY (392 aa). Positions 124–153 are disordered; that stretch reads DRTDQVSTSSSSSSFSEENKKSSSDDSAPA. The span at 130–139 shows a compositional bias: low complexity; sequence STSSSSSSFS. 7 N-linked (GlcNAc...) asparagine glycosylation sites follow: Asn157, Asn189, Asn283, Asn358, Asn373, Asn381, and Asn397. A helical membrane pass occupies residues 424-444; it reads IVVGVGIAVLLIIAVGIYFII. Residues 445–749 lie on the Cytoplasmic side of the membrane; that stretch reads RLRIKNKRLN…QEIVKRLEAM (305 aa). Residues 491–749 enclose the Protein kinase domain; it reads IVVQNRIGRG…QEIVKRLEAM (259 aa). Residues 497–505 and Lys518 contribute to the ATP site; that span reads IGRGSCAEV. Residue Asp615 is the Proton acceptor of the active site.

It belongs to the protein kinase superfamily. TKL Ser/Thr protein kinase family.

It is found in the membrane. It catalyses the reaction L-seryl-[protein] + ATP = O-phospho-L-seryl-[protein] + ADP + H(+). The catalysed reaction is L-threonyl-[protein] + ATP = O-phospho-L-threonyl-[protein] + ADP + H(+). The chain is Probable serine/threonine-protein kinase drkC (drkC) from Dictyostelium discoideum (Social amoeba).